We begin with the raw amino-acid sequence, 189 residues long: Elongation factor P 2 (189 aa).

The protein belongs to the elongation factor P family.

The protein localises to the cytoplasm. It participates in protein biosynthesis; polypeptide chain elongation. Its function is as follows. Involved in peptide bond synthesis. Stimulates efficient translation and peptide-bond synthesis on native or reconstituted 70S ribosomes in vitro. Probably functions indirectly by altering the affinity of the ribosome for aminoacyl-tRNA, thus increasing their reactivity as acceptors for peptidyl transferase. The chain is Elongation factor P 2 (efp2) from Lactobacillus johnsonii (strain CNCM I-12250 / La1 / NCC 533).